A 254-amino-acid chain; its full sequence is Citrate synthase-lysine N-methyltransferase CSKMT, mitochondrial (254 aa).

The N-terminal 45 residues, 1–45 (MLLNRFLVPLRSLQKLTQARRWHQTSLINDLVVNMDKKAMWDRFY), are a transit peptide targeting the mitochondrion.

Belongs to the methyltransferase superfamily.

It is found in the mitochondrion. It catalyses the reaction L-lysyl-[citrate synthase] + S-adenosyl-L-methionine = N(6)-methyl-L-lysyl-[citrate synthase] + S-adenosyl-L-homocysteine + H(+). It carries out the reaction N(6)-methyl-L-lysyl-[citrate synthase] + S-adenosyl-L-methionine = N(6),N(6)-dimethyl-L-lysyl-[citrate synthase] + S-adenosyl-L-homocysteine + H(+). The enzyme catalyses N(6),N(6)-dimethyl-L-lysyl-[citrate synthase] + S-adenosyl-L-methionine = N(6),N(6),N(6)-trimethyl-L-lysyl-[citrate synthase] + S-adenosyl-L-homocysteine + H(+). Citrate synthase-lysine methyltransferase activity is inhibited by S-adenosylhomocysteine (AdoHcy) and oxaloacetate (OAA). Functionally, protein-lysine methyltransferase that selectively trimethylates citrate synthase (CS) in mitochondria. Seems to conduct trimethylation in a highly distributive manner rather than in a processive manner, and thus introduces a single methyl group per binding event. The sequence is that of Citrate synthase-lysine N-methyltransferase CSKMT, mitochondrial from Danio rerio (Zebrafish).